A 291-amino-acid polypeptide reads, in one-letter code: Asialoglycoprotein receptor 1 (291 aa).

Positions 1-19 (MTKECQDLQHLDNEESDHH) are enriched in basic and acidic residues. The disordered stretch occupies residues 1–27 (MTKECQDLQHLDNEESDHHQLRKGPPP). Residues 1–40 (MTKECQDLQHLDNEESDHHQLRKGPPPSQPLLQRLCSGPR) are Cytoplasmic-facing. The short motif at 5-8 (CQDL) is the Endocytosis signal element. At S16 the chain carries Phosphoserine. A lipid anchor (S-palmitoyl cysteine) is attached at C36. The chain crosses the membrane as a helical; Signal-anchor for type II membrane protein span at residues 41–61 (LLLLSLGLSLLLLVVVCVIGS). Residues 61–123 (SQNSQLQKEL…KDLSEDHSSL (63 aa)) are a coiled coil. Topologically, residues 62–291 (QNSQLQKELR…DKASQEPPLL (230 aa)) are extracellular. N79 and N147 each carry an N-linked (GlcNAc...) asparagine glycan. Disulfide bonds link C154–C165, C182–C277, and C255–C269. One can recognise a C-type lectin domain in the interval 161 to 278 (HERSCYWFSR…CQRPYRWVCE (118 aa)). Residues V191, E197, D216, Q240, D242, D243, E253, D254, N265, D266, and E278 each coordinate Ca(2+). At S285 the chain carries Phosphoserine.

Interacts with LASS2. Post-translationally, phosphorylated on a cytoplasmic Ser residue.

The protein resides in the membrane. Its function is as follows. Mediates the endocytosis of plasma glycoproteins to which the terminal sialic acid residue on their complex carbohydrate moieties has been removed. The receptor recognizes terminal galactose and N-acetylgalactosamine units. After ligand binding to the receptor, the resulting complex is internalized and transported to a sorting organelle, where receptor and ligand are disassociated. The receptor then returns to the cell membrane surface. This is Asialoglycoprotein receptor 1 (ASGR1) from Pongo abelii (Sumatran orangutan).